The chain runs to 421 residues: Tryptophan synthase beta chain (421 aa).

Residue Lys112 is modified to N6-(pyridoxal phosphate)lysine.

The protein belongs to the TrpB family. As to quaternary structure, tetramer of two alpha and two beta chains. The cofactor is pyridoxal 5'-phosphate.

The catalysed reaction is (1S,2R)-1-C-(indol-3-yl)glycerol 3-phosphate + L-serine = D-glyceraldehyde 3-phosphate + L-tryptophan + H2O. It functions in the pathway amino-acid biosynthesis; L-tryptophan biosynthesis; L-tryptophan from chorismate: step 5/5. Functionally, the beta subunit is responsible for the synthesis of L-tryptophan from indole and L-serine. This Mycobacterium bovis (strain ATCC BAA-935 / AF2122/97) protein is Tryptophan synthase beta chain (trpB).